We begin with the raw amino-acid sequence, 143 residues long: MAIERTFSIIKPNAVAKNVIGSIFARFEAAGFKIVGTKMLHLTVEQARGFYAEHDGKPFFDGLVEFMTSGPIVVSVLEGENAVQRHRDLLGATNPANALAGTLRADYADSLTENGTHGSDSVESAAREIAYFFGEGEVCPRTR.

Residues Lys-11, Phe-59, Arg-87, Thr-93, Arg-104, and Asn-114 each contribute to the ATP site. Catalysis depends on His-117, which acts as the Pros-phosphohistidine intermediate.

Belongs to the NDK family. Homotetramer. Mg(2+) serves as cofactor.

The protein localises to the cytoplasm. The catalysed reaction is a 2'-deoxyribonucleoside 5'-diphosphate + ATP = a 2'-deoxyribonucleoside 5'-triphosphate + ADP. It carries out the reaction a ribonucleoside 5'-diphosphate + ATP = a ribonucleoside 5'-triphosphate + ADP. Its function is as follows. Major role in the synthesis of nucleoside triphosphates other than ATP. The ATP gamma phosphate is transferred to the NDP beta phosphate via a ping-pong mechanism, using a phosphorylated active-site intermediate. The protein is Nucleoside diphosphate kinase of Escherichia coli O7:K1 (strain IAI39 / ExPEC).